Consider the following 61-residue polypeptide: Weak toxin CM-1c (61 aa).

Disulfide bonds link cysteine 3–cysteine 21, cysteine 14–cysteine 37, cysteine 41–cysteine 53, and cysteine 54–cysteine 59.

Belongs to the three-finger toxin family. Short-chain subfamily. Orphan group VI sub-subfamily. In terms of tissue distribution, expressed by the venom gland.

It is found in the secreted. In Hemachatus haemachatus (Rinkhals), this protein is Weak toxin CM-1c.